The primary structure comprises 554 residues: Wee1-like protein kinase 2-C (554 aa).

Disordered stretches follow at residues 1–86 (MRTA…GGEC) and 145–183 (TLVNVNPFTPQSYRQTHFQPNGKRKERPEDDCSSDSQMK). Polar residues-rich tracts occupy residues 38–48 (SPVSSWRTNNC) and 147–163 (VNVNPFTPQSYRQTHFQ). The Protein kinase domain occupies 213–487 (FLEIEKIGAG…AKNSVLRRCV (275 aa)). Residues 219–227 (IGAGEFGSV) and Lys242 contribute to the ATP site. Residue Asp340 is the Proton acceptor of the active site. The Mg(2+) site is built by Asn345 and Asp377. Residues 490-516 (AAELQKQLNVEKFKTAMLERELQAAKL) adopt a coiled-coil conformation.

This sequence belongs to the protein kinase superfamily. Ser/Thr protein kinase family. WEE1 subfamily.

Its subcellular location is the nucleus. The enzyme catalyses L-tyrosyl-[protein] + ATP = O-phospho-L-tyrosyl-[protein] + ADP + H(+). In terms of biological role, protein tyrosine kinase that phosphorylates and inhibits cdk1 and acts as a regulator of meiosis in oocytes. Required to ensure the meiotic cell cycle in oocytes by phosphorylating cdk1 at 'Tyr-15', leading to inhibit cdk1 activity and prevent meiosis. The chain is Wee1-like protein kinase 2-C (wee2-c) from Xenopus laevis (African clawed frog).